The primary structure comprises 74 residues: Conotoxin Im6.10 (74 aa).

Positions methionine 1–glycine 19 are cleaved as a signal peptide. Residues serine 20–arginine 47 constitute a propeptide that is removed on maturation. Disulfide bonds link cysteine 49/cysteine 58, cysteine 52/cysteine 63, and cysteine 57/cysteine 73.

Expressed by the venom duct.

It localises to the secreted. Functionally, probable neurotoxin. In Conus imperialis (Imperial cone), this protein is Conotoxin Im6.10.